Here is a 242-residue protein sequence, read N- to C-terminus: Transcriptional activator protein RaiR (242 aa).

The region spanning 177–242 is the HTH luxR-type domain; sequence KVADLPRLSR…EQLLGPRRSN (66 aa). The H-T-H motif DNA-binding region spans 201 to 220; that stretch reads AKQICARLSISVSAVQLYLA.

Belongs to the autoinducer-regulated transcriptional regulatory protein family.

The polypeptide is Transcriptional activator protein RaiR (raiR) (Rhizobium etli).